A 153-amino-acid polypeptide reads, in one-letter code: Suppressor of RNA silencing (153 aa).

The segment at 1-23 is C-1; sequence MMATFSCVCCGTSTTSTYCGKRC. The tract at residues 1–85 is interaction with TGB1; that stretch reads MMATFSCVCC…IVSRFCGQKH (85 aa). The interval 19-47 is basic motif (BM); it reads CGKRCERKHVYSETRNKRLELYKKYLLEP. Residues 60–85 form a C-2 region; that stretch reads CGMPCSIAEEACDQLPIVSRFCGQKH. The interaction with replication protein alpha-A stretch occupies residues 86–127; sequence ADLYDSLLKRSEQELLLEFLQKKMQELKLSHIVKMAKLESEV. The stretch at 92–132 forms a coiled coil; that stretch reads LLKRSEQELLLEFLQKKMQELKLSHIVKMAKLESEVNAIRK. Ser-96 bears the Phosphoserine mark.

It belongs to the virgaviridae suppressor of RNA silencing family. As to quaternary structure, homooligomer. Interacts (via C-terminus) with replication protein alpha-A. Interacts (via N-terminus) with the movement protein TGB1; this interaction targets gammab-TGB1 at the periphery of chloroplasts and plasmodesmata. Interacts with host autophagy protein ATG7; this interaction disrupts the host ATG7-ATG8 interaction to promote viral infection. Interacts (via BM region) with host STY46; this interaction inhibits the viral infection. In terms of processing, phosphorylated at Ser-96 by a host PKA-like kinase; the phosphorylation at this site seems to suppress host cell death. Serine-phosphorylated by host STY46 kinase.

Its subcellular location is the host chloroplast envelope. The protein resides in the host endoplasmic reticulum. It is found in the host cell junction. It localises to the host plasmodesma. In terms of biological role, suppressor of RNA-mediated gene silencing, also known as post-transcriptional gene silencing (PTGS), a mechanism of plant viral defense that limits the accumulation of viral RNAs. Promotes viral cell-to-cell long distance movement by enhancing the ATPase activity of TGB1. Enhances RNA helicase activity of replication protein alpha-A. Suppresses autophagy induced by the host as a defense mechanism against viral infection. The sequence is that of Suppressor of RNA silencing from Barley stripe mosaic virus (BSMV).